The following is an 887-amino-acid chain: Pyruvate, phosphate dikinase 2 (887 aa).

Residue threonine 467 is modified to Phosphothreonine; by PDRP1. Histidine 469 acts as the Tele-phosphohistidine intermediate in catalysis. Substrate contacts are provided by arginine 575, arginine 632, glutamate 761, glycine 782, threonine 783, asparagine 784, and aspartate 785. Glutamate 761 provides a ligand contact to Mg(2+). Aspartate 785 contributes to the Mg(2+) binding site. Cysteine 847 functions as the Proton donor in the catalytic mechanism.

This sequence belongs to the PEP-utilizing enzyme family. It depends on Mg(2+) as a cofactor.

It localises to the cytoplasm. The catalysed reaction is pyruvate + phosphate + ATP = phosphoenolpyruvate + AMP + diphosphate + H(+). In terms of biological role, formation of phosphoenolpyruvate. This Oryza sativa subsp. japonica (Rice) protein is Pyruvate, phosphate dikinase 2 (PPDK2).